A 1088-amino-acid chain; its full sequence is TBC1 domain family member 31 (1088 aa).

A disordered region spans residues 1 to 20; that stretch reads MQTTDLGNKESGKIWHRKPN. WD repeat units follow at residues 33–74, 75–116, 117–157, 158–200, 201–248, 249–296, and 297–334; these read HVDA…LNRN, RFDL…TGAK, ELVS…LDTF, QRKR…SDTL, ACKY…SKQL, FRII…IQTC, and KLVFDIGSHDNGIVTSSVSPNGRYITSVMENGSLNIYS. The segment at 356–381 is disordered; it reads SKDKDSTGNKSGVSGASQEKVRVSSG. A compositionally biased stretch (polar residues) spans 363–372; the sequence is GNKSGVSGAS. One can recognise a Rab-GAP TBC domain in the interval 432–607; the sequence is EYPAKYRMFI…RLFDNVFSNH (176 aa). Coiled-coil stretches lie at residues 736-903 and 1048-1076; these read QQQE…VETD and RGELENRERALISEVRELRQKLATQARRK.

It is found in the cytoplasm. The protein localises to the cytoskeleton. It localises to the microtubule organizing center. The protein resides in the centrosome. Its subcellular location is the centriolar satellite. It is found in the cilium basal body. In terms of biological role, molecular adapter which is involved in cilium biogenesis. Part of a functional complex including OFD1 a centriolar protein involved in cilium assembly. Could regulate the cAMP-dependent phosphorylation of OFD1, and its subsequent ubiquitination by PJA2 which ultimately leads to its proteasomal degradation. The polypeptide is TBC1 domain family member 31 (Xenopus tropicalis (Western clawed frog)).